Here is a 497-residue protein sequence, read N- to C-terminus: Carboxylesterase (497 aa).

Residue Ser185 is the Acyl-ester intermediate of the active site. Active-site charge relay system residues include Glu319 and His415.

Belongs to the type-B carboxylesterase/lipase family.

Its subcellular location is the secreted. It catalyses the reaction a carboxylic ester + H2O = an alcohol + a carboxylate + H(+). The polypeptide is Carboxylesterase (Thermobifida fusca (Thermomonospora fusca)).